Reading from the N-terminus, the 308-residue chain is MTEQRKHKVITLMGPTASGKTALAIELVKNYDCEIISVDSALIYQQMDVGSAKPDAAELAVAPHHLIDIIDPADSYSAADFRKDALLKIEDIISRGKTPLLVGGTMMYFKALIEGLSPLPGANDEIRAQIAVEAQANGWQALHDQLKEVDPVAAARIHPNDPQRLARALEVFRISGKSLTELTKVKSEAFPYEAIQFAIAPNDRKVLHKAIETRFKAMLGLGFVEEVKKLKSRDDLHLELPSMRCVGYRQCWQHLDGEYDYETMVEKAIVATRQLAKRQLTWLRGWPDLIWLESGAENNLDTVLRYSR.

14–21 provides a ligand contact to ATP; it reads GPTASGKT. 16–21 contacts substrate; sequence TASGKT. Interaction with substrate tRNA regions lie at residues 39–42, 163–167, and 244–249; these read DSAL, QRLAR, and RCVGYR.

The protein belongs to the IPP transferase family. In terms of assembly, monomer. It depends on Mg(2+) as a cofactor.

The catalysed reaction is adenosine(37) in tRNA + dimethylallyl diphosphate = N(6)-dimethylallyladenosine(37) in tRNA + diphosphate. In terms of biological role, catalyzes the transfer of a dimethylallyl group onto the adenine at position 37 in tRNAs that read codons beginning with uridine, leading to the formation of N6-(dimethylallyl)adenosine (i(6)A). The chain is tRNA dimethylallyltransferase from Shewanella piezotolerans (strain WP3 / JCM 13877).